The primary structure comprises 282 residues: NADPH-dependent 7-cyano-7-deazaguanine reductase (282 aa).

88 to 90 lines the substrate pocket; the sequence is IES. 90–91 serves as a coordination point for NADPH; the sequence is SK. C190 (thioimide intermediate) is an active-site residue. D197 functions as the Proton donor in the catalytic mechanism. 229 to 230 contributes to the substrate binding site; it reads HE. An NADPH-binding site is contributed by 258–259; sequence RG.

Belongs to the GTP cyclohydrolase I family. QueF type 2 subfamily. As to quaternary structure, homodimer.

The protein resides in the cytoplasm. It catalyses the reaction 7-aminomethyl-7-carbaguanine + 2 NADP(+) = 7-cyano-7-deazaguanine + 2 NADPH + 3 H(+). The protein operates within tRNA modification; tRNA-queuosine biosynthesis. In terms of biological role, catalyzes the NADPH-dependent reduction of 7-cyano-7-deazaguanine (preQ0) to 7-aminomethyl-7-deazaguanine (preQ1). This chain is NADPH-dependent 7-cyano-7-deazaguanine reductase, found in Shigella flexneri serotype 5b (strain 8401).